Consider the following 767-residue polypeptide: U3 small nucleolar RNA-associated protein 14 homolog A (767 aa).

A disordered region spans residues 23 to 49 (TSNYPLSASEDEGDSDGERKHQKLLEA). Residues S29, S31, S37, S52, S77, and S81 each carry the phosphoserine modification. Residue K122 forms a Glycyl lysine isopeptide (Lys-Gly) (interchain with G-Cter in SUMO2) linkage. T205 carries the post-translational modification Phosphothreonine. The stretch at 317–346 (LEARQAMQEQLAKNKELTQKLQVVSESEEE) forms a coiled coil. Residues 338–554 (QVVSESEEEG…SKGKNKKEQM (217 aa)) form a disordered region. A compositionally biased stretch (acidic residues) spans 342–355 (ESEEEGGADEEEAL). A compositionally biased stretch (basic and acidic residues) spans 398–433 (AAHEFPENEENDKPVAEEDELLKELEKRRSLRKRSE). Position 431 is a citrulline (R431). K447 participates in a covalent cross-link: Glycyl lysine isopeptide (Lys-Gly) (interchain with G-Cter in SUMO2). Position 451 is a phosphoserine (S451). The segment covering 486 to 498 (VWEEEPAPEEDEP) has biased composition (acidic residues). Residues 503–538 (RPERMRTLEELEELGKEDSLPNKERPRPSVEGEQVR) are compositionally biased toward basic and acidic residues. Residue K518 forms a Glycyl lysine isopeptide (Lys-Gly) (interchain with G-Cter in SUMO2) linkage. R586 is modified (citrulline). Residues 730–767 (TAEDVDCRSSPRSDVPVMQSNPKQHSKHQKQRKKSSIG) form a disordered region. A compositionally biased stretch (basic residues) spans 753–767 (QHSKHQKQRKKSSIG).

The protein belongs to the UTP14 family. As to quaternary structure, interacts with DHX37. Post-translationally, citrullinated by PADI4. As to expression, ubiquitously expressed.

It localises to the nucleus. It is found in the nucleolus. Functionally, may be required for ribosome biogenesis. The chain is U3 small nucleolar RNA-associated protein 14 homolog A (Utp14a) from Mus musculus (Mouse).